The sequence spans 290 residues: Bifunctional protein FolD 3 (290 aa).

NADP(+) is bound by residues 163–165 (GHS) and Ile229.

The protein belongs to the tetrahydrofolate dehydrogenase/cyclohydrolase family. As to quaternary structure, homodimer.

It catalyses the reaction (6R)-5,10-methylene-5,6,7,8-tetrahydrofolate + NADP(+) = (6R)-5,10-methenyltetrahydrofolate + NADPH. The catalysed reaction is (6R)-5,10-methenyltetrahydrofolate + H2O = (6R)-10-formyltetrahydrofolate + H(+). Its pathway is one-carbon metabolism; tetrahydrofolate interconversion. Its function is as follows. Catalyzes the oxidation of 5,10-methylenetetrahydrofolate to 5,10-methenyltetrahydrofolate and then the hydrolysis of 5,10-methenyltetrahydrofolate to 10-formyltetrahydrofolate. The protein is Bifunctional protein FolD 3 of Roseobacter denitrificans (strain ATCC 33942 / OCh 114) (Erythrobacter sp. (strain OCh 114)).